A 1755-amino-acid chain; its full sequence is MESQQLSQHSPIFHGSACASVTSKEVQTTQDPLDISASKTEECEKVSTQANSQQPTTPPSSAVPENHHHASPQAAQVPLPQNGPYPQQRMMNTQQANISGWPVYGHPSLMPYPPYQMSPMYAPPGAQSQFTQYPQYVGTHLNTPSPESGNSFPDSSSAKSNMTSTNQHVRPPPILTSPNDFLNWVKIYIKFLQNSNLGDIIPTATRKAVRQMTDDELTFLCHTFQLFAPSQFLPPWVKDILSVDYTDIMKILSKSINKMQSDTQEVNDITTLATLHYNGSTPADAFEAEVTNILDRLNNNGIPINNKVACQFIMRGLSGEYKFLPYARHRCIHMTVADLFSDIHSMYEEQQESKRNKSTYRRSPSDEKKDSRTYTNTTKPKSITRNSQKPNNSQSRTARAHNVSTFNNSPGPDNDLIRGSTTEPIQLKNTHDLHLGQELTESTVNHTNHSDDELPGHLLLDSGASRTLIRSAHHIHSASSNPDINVVDAQKRNIPINAIGDLQFHFQDNTKTSIKVLHTPNIAYDLLSLNELAAVDITACFTKNVLERSDGTVLAPIVKYGDFYWVSKKYLLPSNISVPTINNVHTSESTRKYPYPFIHRMLAHANAQTIRYSLKNNTITYFNESDVDWSSAIDYQCPDCLIGKSTKHRHIKGSRLKYQNSYEPFQYLHTDIFGPVHNLPKSAPSYFISFTDETTKFRWVYPLHDRREDSILDVFTTILAFIKNQFQASVLVIQMDRGSEYTNRTLHKFLEKNGITPCYTTTADSRAHGVAERLNRTLLDDCRTQLQCSGLPNHLWFSAIEFSTIVRNSLASPKSKKSARQHAGLAGLDISTLLPFGQPVIVNDHNPNSKIHPRGIPGYALHPSRNSYGYIIYLPSLKKTVDTTNYVILQGKESRLDQFNYDALTFDEDLNRLTASYQSFIASNEIQQSNDLNIESDHDFQSDIELYPEQPRNVLSKAVSPTDSTPPSTHTEDSKRVSKTNIRAPREVDPNISESNILPSKKRSSTPQISDIESTDSGGMHRLDVPLLAPMSQSNTHESSYASKSKDFRHSDSYSDNETNHTNVPISSTGGTNNKTVPQTSEQETEKRIIHRSPSIDTSSSESNSLHHVVPIKTSDTCPKENTEESIIADLPLPDLPPEPPTELSDSFKELPPINSRQTNSSLGGIGDSNAYTTINSKKRSLEDNETEIKVSRDTWNTKNMRSLEPPRSKKRIHLIAAVKAVKSIKPIRTTLRYDEAITYNKDIKEKEKYIEAYHKEVNQLLKMKTWDTDKYYDRKEIDPKRVINSMFIFNRKRDGTHKARFVARGDIQHPDTYDSGMQSNTVHHYALMTSLSLALDNNYHITQLDISSAYLYADIKEELYIRPPPHLGMNDKLIRLKKSLYGLKQSGANWYETIKSYLIKQCGMEEVRGWSCVFKNSQVTICLFVDDMVLFSKNLNSNKRIIDKLKMQYDTKIINLGESDEEIQYDILGLEIKYQRGKYMKLGMENSLTEKIPKLNVPLNPKGRKLSAPGQPGLYIDQQELELEEDDYKMKVHEMQKLIGLASYVGYKFRFDLLYYINTLAQHILFPSKQVLDMTYELIQFIWNTRDKQLIWHKSKPVKPTNKLVVISDASYGNQPYYKSQIGNIYLLNGKVIGGKSTKASLTCTSTTEAEIHAISESVPLLNNLSYLIQELDKKPITKGLLTDSKSTISIIISNNEEKFRNRFFGTKAMRLRDEVSGNHLHVCYIETKKNIADVMTKPLPIKTFKLLTNKWIH.

3 stretches are compositionally biased toward polar residues: residues 20 to 31, 46 to 55, and 137 to 168; these read SVTSKEVQTTQD, VSTQANSQQP, and VGTHLNTPSPESGNSFPDSSSAKSNMTSTNQH. Disordered regions lie at residues 20–84, 137–173, and 350–420; these read SVTS…QNGP, VGTHLNTPSPESGNSFPDSSSAKSNMTSTNQHVRPPP, and QQES…IRGS. The interval 299-401 is RNA-binding; it reads NNGIPINNKV…NSQSRTARAH (103 aa). A compositionally biased stretch (basic and acidic residues) spans 363–372; the sequence is SPSDEKKDSR. The span at 373–411 shows a compositional bias: polar residues; the sequence is TYTNTTKPKSITRNSQKPNNSQSRTARAHNVSTFNNSPG. The active-site For protease activity; shared with dimeric partner is the Asp461. Residues 583–640 are integrase-type zinc finger-like; the sequence is NVHTSESTRKYPYPFIHRMLAHANAQTIRYSLKNNTITYFNESDVDWSSAIDYQCPDC. Positions 660–835 constitute an Integrase catalytic domain; sequence NSYEPFQYLH…AGLDISTLLP (176 aa). The Mg(2+) site is built by Asp671 and Asp736. The segment at 956–1172 is disordered; it reads SKAVSPTDST…LGGIGDSNAY (217 aa). Residues 960–969 are compositionally biased toward low complexity; that stretch reads SPTDSTPPST. 2 stretches are compositionally biased toward polar residues: residues 1005 to 1017 and 1031 to 1043; these read STPQISDIESTDS and MSQSNTHESSYAS. A compositionally biased stretch (basic and acidic residues) spans 1044 to 1053; the sequence is KSKDFRHSDS. Composition is skewed to polar residues over residues 1054–1082 and 1095–1106; these read YSDNETNHTNVPISSTGGTNNKTVPQTSE and SIDTSSSESNSL. A Bipartite nuclear localization signal motif is present at residues 1178-1212; it reads KKRSLEDNETEIKVSRDTWNTKNMRSLEPPRSKKR. The region spanning 1338–1476 is the Reverse transcriptase Ty1/copia-type domain; sequence NNYHITQLDI…DILGLEIKYQ (139 aa). The Mg(2+) site is built by Asp1346, Asp1427, Asp1428, Asp1610, Glu1652, and Asp1685. The region spanning 1610–1752 is the RNase H Ty1/copia-type domain; the sequence is DASYGNQPYY…IKTFKLLTNK (143 aa).

In terms of assembly, the capsid protein forms a homotrimer, from which the VLPs are assembled. The protease is a homodimer, whose active site consists of two apposed aspartic acid residues. Initially, virus-like particles (VLPs) are composed of the structural unprocessed proteins Gag and Gag-Pol, and also contain the host initiator methionine tRNA (tRNA(i)-Met) which serves as a primer for minus-strand DNA synthesis, and a dimer of genomic Ty RNA. Processing of the polyproteins occurs within the particle and proceeds by an ordered pathway, called maturation. First, the protease (PR) is released by autocatalytic cleavage of the Gag-Pol polyprotein yielding capsid protein p45 and a Pol-p154 precursor protein. This cleavage is a prerequisite for subsequent processing of Pol-p154 at the remaining sites to release the mature structural and catalytic proteins. Maturation takes place prior to the RT reaction and is required to produce transposition-competent VLPs.

The protein resides in the cytoplasm. Its subcellular location is the nucleus. The catalysed reaction is DNA(n) + a 2'-deoxyribonucleoside 5'-triphosphate = DNA(n+1) + diphosphate. It carries out the reaction Endonucleolytic cleavage to 5'-phosphomonoester.. Its function is as follows. Capsid protein (CA) is the structural component of the virus-like particle (VLP), forming the shell that encapsulates the retrotransposons dimeric RNA genome. The particles are assembled from trimer-clustered units and there are holes in the capsid shells that allow for the diffusion of macromolecules. CA also has nucleocapsid-like chaperone activity, promoting primer tRNA(i)-Met annealing to the multipartite primer-binding site (PBS), dimerization of Ty1 RNA and initiation of reverse transcription. In terms of biological role, the aspartyl protease (PR) mediates the proteolytic cleavages of the Gag and Gag-Pol polyproteins after assembly of the VLP. Reverse transcriptase/ribonuclease H (RT) is a multifunctional enzyme that catalyzes the conversion of the retro-elements RNA genome into dsDNA within the VLP. The enzyme displays a DNA polymerase activity that can copy either DNA or RNA templates, and a ribonuclease H (RNase H) activity that cleaves the RNA strand of RNA-DNA heteroduplexes during plus-strand synthesis and hydrolyzes RNA primers. The conversion leads to a linear dsDNA copy of the retrotransposon that includes long terminal repeats (LTRs) at both ends. Functionally, integrase (IN) targets the VLP to the nucleus, where a subparticle preintegration complex (PIC) containing at least integrase and the newly synthesized dsDNA copy of the retrotransposon must transit the nuclear membrane. Once in the nucleus, integrase performs the integration of the dsDNA into the host genome. The polypeptide is Transposon Ty1-BL Gag-Pol polyprotein (TY1B-BL) (Saccharomyces cerevisiae (strain ATCC 204508 / S288c) (Baker's yeast)).